The primary structure comprises 456 residues: RuvB-like 1 (456 aa).

A disordered region spans residues 1–20 (MKIEEVKSTTKTQRIASHSH). Residue 70–77 (GPPGTGKT) participates in ATP binding.

It belongs to the RuvB family. Forms homohexameric rings. Can form a dodecamer with ruvbl2 made of two stacked hexameric rings. Is a component of the RNA polymerase II holoenzyme complex. Component of the chromatin-remodeling Ino80 complex. Component of some MLL1/MLL complex.

It is found in the nucleus. Its subcellular location is the dynein axonemal particle. The catalysed reaction is ATP + H2O = ADP + phosphate + H(+). Its function is as follows. Has single-stranded DNA-stimulated ATPase and ATP-dependent DNA helicase (3' to 5') activity suggesting a role in nuclear processes such as recombination and transcription. Proposed core component of the chromatin remodeling Ino80 complex which exhibits DNA- and nucleosome-activated ATPase activity and catalyzes ATP-dependent nucleosome sliding. May act as a negative regulator of embryonic heart growth. The polypeptide is RuvB-like 1 (ruvbl1) (Danio rerio (Zebrafish)).